The following is a 467-amino-acid chain: Glutamate--tRNA ligase (467 aa).

A 'HIGH' region motif is present at residues 9 to 19 (PSPTGFLHIGG). Positions 250–254 (KLSKR) match the 'KMSKS' region motif. An ATP-binding site is contributed by K253.

Belongs to the class-I aminoacyl-tRNA synthetase family. Glutamate--tRNA ligase type 1 subfamily. In terms of assembly, monomer.

The protein resides in the cytoplasm. The catalysed reaction is tRNA(Glu) + L-glutamate + ATP = L-glutamyl-tRNA(Glu) + AMP + diphosphate. Catalyzes the attachment of glutamate to tRNA(Glu) in a two-step reaction: glutamate is first activated by ATP to form Glu-AMP and then transferred to the acceptor end of tRNA(Glu). This is Glutamate--tRNA ligase from Mesomycoplasma hyopneumoniae (strain J / ATCC 25934 / NCTC 10110) (Mycoplasma hyopneumoniae).